A 633-amino-acid chain; its full sequence is Shootin-1 (633 aa).

N-acetylmethionine is present on methionine 1. Phosphoserine occurs at positions 3 and 4. A coiled-coil region spans residues 7 to 353; sequence EKQLQLITSL…RVNQSENSVP (347 aa). 2 positions are modified to phosphoserine; by PAK1: serine 101 and serine 249. The interval 343–508 is disordered; that stretch reads KRVNQSENSV…LATSESKSMP (166 aa). Over residues 352-369 the composition is skewed to pro residues; the sequence is VPPPPPPPPPLPPPPPNP. The residue at position 375 (serine 375) is a Phosphoserine. The segment covering 403–418 has biased composition (basic and acidic residues); the sequence is TDLKRQAVEEMMDRIK. Over residues 456–465 the composition is skewed to polar residues; that stretch reads LNKSTSSRSL. Serine 473 is modified (phosphoserine). Threonine 487 is modified (phosphothreonine). The segment covering 490–505 has biased composition (polar residues); sequence ADSSSPTGILATSESK. Phosphoserine is present on serine 494. A Phosphothreonine modification is found at threonine 496. A phosphoserine mark is found at serine 506 and serine 515. The tract at residues 525-633 is disordered; the sequence is TLEAEFNNPC…KTGETDSSNC (109 aa). Residue threonine 537 is modified to Phosphothreonine. Polar residues predominate over residues 550-559; the sequence is CTNSKVTFQP. The segment covering 590 to 621 has biased composition (basic and acidic residues); sequence PQTKDQAAEKDPTQCKEEERGETQPEFKEDSS.

It belongs to the shootin family. Interacts with PFN2. Interacts (via N-terminus) with KIF20B; this interaction is direct and promotes the association of SHTN1 to microtubules in primary neurons. Associates with microtubule. Interacts with L1CAM; this interaction occurs in axonal growth cones. Interacts with actin filament retrograde flow; this interaction is enhanced in a netrin-1- and PAK1-dependent manner and promotes F-actin-substrate coupling and concomitant formation of traction forces at axonal growth cones. Interacts with RUFY3. Post-translationally, phosphorylated on Ser-101 and Ser-249 by PAK1 through a CDC42- and RAC1-dependent signaling pathway, which enhances its association with F-actin retrograde flow in filopodia and lamellipodia of axonal growth cones. Phosphorylation on Ser-101 and Ser-249 is increased by netrin-1. Brain-specific (at protein level). Expressed in hippocampal neurons.

It is found in the perikaryon. The protein localises to the cell projection. Its subcellular location is the axon. The protein resides in the growth cone. It localises to the cytoplasm. It is found in the cytoskeleton. The protein localises to the filopodium. Its subcellular location is the lamellipodium. Involved in the generation of internal asymmetric signals required for neuronal polarization and neurite outgrowth. Mediates netrin-1-induced F-actin-substrate coupling or 'clutch engagement' within the axon growth cone through activation of CDC42, RAC1 and PAK1-dependent signaling pathway, thereby converting the F-actin retrograde flow into traction forces, concomitantly with filopodium extension and axon outgrowth. Plays a role in cytoskeletal organization by regulating the subcellular localization of phosphoinositide 3-kinase (PI3K) activity at the axonal growth cone. Also plays a role in regenerative neurite outgrowth. In the developing cortex, cooperates with KIF20B to promote both the transition from the multipolar to the bipolar stage and the radial migration of cortical neurons from the ventricular zone toward the superficial layer of the neocortex. Involved in the accumulation of phosphatidylinositol 3,4,5-trisphosphate (PIP3) in the growth cone of primary hippocampal neurons. The polypeptide is Shootin-1 (Rattus norvegicus (Rat)).